The primary structure comprises 464 residues: Argininosuccinate lyase (464 aa).

It belongs to the lyase 1 family. Argininosuccinate lyase subfamily.

Its subcellular location is the cytoplasm. The enzyme catalyses 2-(N(omega)-L-arginino)succinate = fumarate + L-arginine. The protein operates within amino-acid biosynthesis; L-arginine biosynthesis; L-arginine from L-ornithine and carbamoyl phosphate: step 3/3. The protein is Argininosuccinate lyase of Pseudomonas savastanoi pv. phaseolicola (strain 1448A / Race 6) (Pseudomonas syringae pv. phaseolicola (strain 1448A / Race 6)).